Here is a 335-residue protein sequence, read N- to C-terminus: Large ribosomal subunit protein uL10 (335 aa).

Residues 300–335 (QVSEQAAEKKEEKKEEEKKGPSEEEIGGGLSSLFGG) form a disordered region. The segment covering 305–321 (AAEKKEEKKEEEKKGPS) has biased composition (basic and acidic residues). Over residues 326 to 335 (GGGLSSLFGG) the composition is skewed to gly residues.

Belongs to the universal ribosomal protein uL10 family. As to quaternary structure, part of the 50S ribosomal subunit. Forms part of the ribosomal stalk which helps the ribosome interact with GTP-bound translation factors. Forms a heptameric L10(L12)2(L12)2(L12)2 complex, where L10 forms an elongated spine to which the L12 dimers bind in a sequential fashion.

Its function is as follows. Forms part of the ribosomal stalk, playing a central role in the interaction of the ribosome with GTP-bound translation factors. This is Large ribosomal subunit protein uL10 from Sulfolobus acidocaldarius (strain ATCC 33909 / DSM 639 / JCM 8929 / NBRC 15157 / NCIMB 11770).